We begin with the raw amino-acid sequence, 285 residues long: Glutamate racemase (285 aa).

Substrate contacts are provided by residues 28-29 (DS) and 60-61 (YG). Cysteine 92 serves as the catalytic Proton donor/acceptor. 93-94 (NT) is a substrate binding site. The active-site Proton donor/acceptor is cysteine 204. 205-206 (TH) is a substrate binding site.

This sequence belongs to the aspartate/glutamate racemases family.

The enzyme catalyses L-glutamate = D-glutamate. The protein operates within cell wall biogenesis; peptidoglycan biosynthesis. Functionally, provides the (R)-glutamate required for cell wall biosynthesis. The chain is Glutamate racemase from Shigella flexneri serotype 5b (strain 8401).